Reading from the N-terminus, the 217-residue chain is TLD domain-containing protein 2 (217 aa).

The segment at 1–48 (MKSLRWRYTRLPSQVEDALSGEEDKEEEEEKEEETTPAPTPVPEHPMV) is disordered. Acidic residues predominate over residues 19 to 35 (LSGEEDKEEEEEKEEET). The region spanning 56 to 217 (QVLGASEMSQ…ISELEAWVLS (162 aa)) is the TLDc domain.

It belongs to the OXR1 family.

This Bos taurus (Bovine) protein is TLD domain-containing protein 2 (TLDC2).